The primary structure comprises 346 residues: Nuclear distribution protein nudE-like 1 (346 aa).

A coiled-coil region spans residues 13-190 (KEEIVYWREL…LAVRERQTNG (178 aa)). 2 disordered regions span residues 184 to 205 (RERQ…DCDK) and 325 to 346 (YDPP…PLSV). Polar residues predominate over residues 188–200 (TNGTRKSAPSSPT). Positions 335 to 346 (PPSPPGMLPLSV) are enriched in pro residues.

The protein belongs to the nudE family. Phosphorylated in mitosis.

It is found in the cytoplasm. The protein resides in the cytoskeleton. It localises to the microtubule organizing center. The protein localises to the centrosome. Its subcellular location is the spindle. Required for organization of the cellular microtubule array and microtubule anchoring at the centrosome. Positively regulates the activity of the minus-end directed microtubule motor protein dynein. May enhance dynein-mediated microtubule sliding by targeting dynein to the microtubule plus end. Positively regulates lysosome peripheral distribution and ruffled border formation in osteoclasts. The chain is Nuclear distribution protein nudE-like 1 (ndel1) from Xenopus tropicalis (Western clawed frog).